A 98-amino-acid polypeptide reads, in one-letter code: C-X-C motif chemokine 10 (98 aa).

A signal peptide spans 1 to 21 (MNPSAAVVLCLVLLSLSGTQG). Position 26 is a citrulline (Arg-26). 2 cysteine pairs are disulfide-bonded: Cys-30/Cys-57 and Cys-32/Cys-74.

The protein belongs to the intercrine alpha (chemokine CxC) family. Monomer, dimer, and tetramer. Interacts with CXCR3 (via N-terminus). In terms of tissue distribution, in the central nervous system, CXCL10 is predominantly localized to activated neurons. Expressed in both microglia and astrocytes.

It is found in the secreted. In terms of biological role, pro-inflammatory cytokine that is involved in a wide variety of processes such as chemotaxis, differentiation, and activation of peripheral immune cells, regulation of cell growth, apoptosis and modulation of angiostatic effects. Plays thereby an important role during viral infections by stimulating the activation and migration of immune cells to the infected sites. Mechanistically, binding of CXCL10 to the CXCR3 receptor activates G protein-mediated signaling and results in downstream activation of phospholipase C-dependent pathway, an increase in intracellular calcium production and actin reorganization. In turn, recruitment of activated Th1 lymphocytes occurs at sites of inflammation. Activation of the CXCL10/CXCR3 axis also plays an important role in neurons in response to brain injury for activating microglia, the resident macrophage population of the central nervous system, and directing them to the lesion site. This recruitment is an essential element for neuronal reorganization. This Rattus norvegicus (Rat) protein is C-X-C motif chemokine 10 (Cxcl10).